We begin with the raw amino-acid sequence, 249 residues long: Probable transcriptional regulatory protein Dtur_1615 (249 aa).

The protein belongs to the TACO1 family.

The protein resides in the cytoplasm. The polypeptide is Probable transcriptional regulatory protein Dtur_1615 (Dictyoglomus turgidum (strain DSM 6724 / Z-1310)).